Reading from the N-terminus, the 431-residue chain is Histidinol dehydrogenase (431 aa).

3 residues coordinate NAD(+): Tyr-130, Gln-191, and Asn-214. 3 residues coordinate substrate: Ser-237, Gln-261, and His-264. Residues Gln-261 and His-264 each contribute to the Zn(2+) site. Active-site proton acceptor residues include Glu-329 and His-330. The substrate site is built by His-330, Asp-363, Glu-417, and His-422. Asp-363 lines the Zn(2+) pocket. His-422 lines the Zn(2+) pocket.

The protein belongs to the histidinol dehydrogenase family. The cofactor is Zn(2+).

It catalyses the reaction L-histidinol + 2 NAD(+) + H2O = L-histidine + 2 NADH + 3 H(+). Its pathway is amino-acid biosynthesis; L-histidine biosynthesis; L-histidine from 5-phospho-alpha-D-ribose 1-diphosphate: step 9/9. In terms of biological role, catalyzes the sequential NAD-dependent oxidations of L-histidinol to L-histidinaldehyde and then to L-histidine. This is Histidinol dehydrogenase from Psychrobacter arcticus (strain DSM 17307 / VKM B-2377 / 273-4).